The following is a 315-amino-acid chain: Cytochrome bo(3) ubiquinol oxidase subunit 2 (315 aa).

The N-terminal stretch at 1 to 24 (MRLRKYNKSLGWLSLFAGTVLLSG) is a signal peptide. The N-palmitoyl cysteine moiety is linked to residue Cys-25. Cys-25 is lipidated: S-diacylglycerol cysteine. The Periplasmic portion of the chain corresponds to 25 to 50 (CNSALLDPKGQIGLEQRSLILTAFGL). A helical transmembrane segment spans residues 51–68 (MLIVVIPAILMAVGFAWK). Residues 69–92 (YRASNKDAKYSPNWSHSNKVEAVV) lie on the Cytoplasmic side of the membrane. The helical transmembrane segment at 93–111 (WTVPILIIIFLAVLTWKTT) threads the bilayer. The Periplasmic portion of the chain corresponds to 112-315 (HALEPSKPLA…MDMSHAESAH (204 aa)). The interval 288–315 (MDMTQPEGEHSAHEGMEGMDMSHAESAH) is disordered. The segment covering 294 to 315 (EGEHSAHEGMEGMDMSHAESAH) has biased composition (basic and acidic residues).

Belongs to the cytochrome c oxidase subunit 2 family. In terms of assembly, heterooctamer of two A chains, two B chains, two C chains and two D chains.

The protein localises to the cell inner membrane. Cytochrome bo(3) ubiquinol terminal oxidase is the component of the aerobic respiratory chain of E.coli that predominates when cells are grown at high aeration. Has proton pump activity across the membrane in addition to electron transfer, pumping 2 protons/electron. The protein is Cytochrome bo(3) ubiquinol oxidase subunit 2 (cyoA) of Escherichia coli O6:H1 (strain CFT073 / ATCC 700928 / UPEC).